Reading from the N-terminus, the 315-residue chain is Borealin (315 aa).

Disordered stretches follow at residues I103–G126 and L138–M226. T146 bears the Phosphothreonine mark. S152 is modified (phosphoserine). A compositionally biased stretch (basic residues) spans A153–R162. S163 carries the post-translational modification Phosphoserine. Over residues S178–N188 the composition is skewed to low complexity. S205 carries the post-translational modification Phosphoserine. A Phosphothreonine modification is found at T209. S218, S220, and S244 each carry phosphoserine.

Belongs to the borealin family. In terms of assembly, component of the CPC complex. Ubiquitously expressed in the early embryo. Expression is restricted to the ventral nerve cord and brain during later embryonic stages.

The protein resides in the nucleus. It localises to the chromosome. The protein localises to the centromere. Its subcellular location is the cytoplasm. It is found in the cytoskeleton. The protein resides in the spindle. In terms of biological role, component of the chromosomal passenger complex (CPC), a complex that acts as a key regulator of embryonic mitosis. The CPC complex has essential functions at the centromere for ensuring sister chromatid cohesion, recruitment of the CPC to kinetochores, and chromosome alignment and segregation. There is no function in meiotic histone phosphorylation or spindle formation. This Drosophila melanogaster (Fruit fly) protein is Borealin (borr).